The primary structure comprises 528 residues: D-3-phosphoglycerate dehydrogenase (528 aa).

Residues 151–152 (RI), D171, 230–232 (AAR), and D256 each bind NAD(+). The active site involves R232. E261 is a catalytic residue. The active-site Proton donor is the H279. 279 to 282 (HLGA) contacts NAD(+). The ACT domain occupies 455-528 (NLVIRYVDQP…ANKLEVVNLS (74 aa)).

Belongs to the D-isomer specific 2-hydroxyacid dehydrogenase family.

It catalyses the reaction (2R)-3-phosphoglycerate + NAD(+) = 3-phosphooxypyruvate + NADH + H(+). It carries out the reaction (R)-2-hydroxyglutarate + NAD(+) = 2-oxoglutarate + NADH + H(+). It participates in amino-acid biosynthesis; L-serine biosynthesis; L-serine from 3-phospho-D-glycerate: step 1/3. In terms of biological role, catalyzes the reversible oxidation of 3-phospho-D-glycerate to 3-phosphonooxypyruvate, the first step of the phosphorylated L-serine biosynthesis pathway. Also catalyzes the reversible oxidation of 2-hydroxyglutarate to 2-oxoglutarate. The chain is D-3-phosphoglycerate dehydrogenase (serA) from Mycobacterium leprae (strain TN).